A 312-amino-acid polypeptide reads, in one-letter code: Ribosomal protein L11 methyltransferase (312 aa).

Residues Thr163, Gly184, Asp206, and Asn248 each coordinate S-adenosyl-L-methionine.

This sequence belongs to the methyltransferase superfamily. PrmA family.

Its subcellular location is the cytoplasm. The enzyme catalyses L-lysyl-[protein] + 3 S-adenosyl-L-methionine = N(6),N(6),N(6)-trimethyl-L-lysyl-[protein] + 3 S-adenosyl-L-homocysteine + 3 H(+). Functionally, methylates ribosomal protein L11. This is Ribosomal protein L11 methyltransferase from Clostridium botulinum (strain Loch Maree / Type A3).